The following is a 205-amino-acid chain: Adenylyl-sulfate kinase (205 aa).

Glycine 31–serine 38 contributes to the ATP binding site. Serine 105 serves as the catalytic Phosphoserine intermediate.

This sequence belongs to the APS kinase family.

It carries out the reaction adenosine 5'-phosphosulfate + ATP = 3'-phosphoadenylyl sulfate + ADP + H(+). Its pathway is sulfur metabolism; hydrogen sulfide biosynthesis; sulfite from sulfate: step 2/3. In terms of biological role, catalyzes the synthesis of activated sulfate. The protein is Adenylyl-sulfate kinase of Shewanella pealeana (strain ATCC 700345 / ANG-SQ1).